A 471-amino-acid chain; its full sequence is ATP synthase subunit beta (471 aa).

Residue 156–163 coordinates ATP; sequence GGAGVGKT.

This sequence belongs to the ATPase alpha/beta chains family. As to quaternary structure, F-type ATPases have 2 components, CF(1) - the catalytic core - and CF(0) - the membrane proton channel. CF(1) has five subunits: alpha(3), beta(3), gamma(1), delta(1), epsilon(1). CF(0) has three main subunits: a(1), b(2) and c(9-12). The alpha and beta chains form an alternating ring which encloses part of the gamma chain. CF(1) is attached to CF(0) by a central stalk formed by the gamma and epsilon chains, while a peripheral stalk is formed by the delta and b chains.

The protein resides in the cell inner membrane. It carries out the reaction ATP + H2O + 4 H(+)(in) = ADP + phosphate + 5 H(+)(out). Produces ATP from ADP in the presence of a proton gradient across the membrane. The catalytic sites are hosted primarily by the beta subunits. This is ATP synthase subunit beta from Nitratidesulfovibrio vulgaris (strain DSM 19637 / Miyazaki F) (Desulfovibrio vulgaris).